The following is a 350-amino-acid chain: Cytochrome c biogenesis protein CcsA (350 aa).

Helical transmembrane passes span 23-43 (NVAFAISLGAMLFYWGGAAFP), 47-67 (LLAELGLAGMIGANLTMAALL), 82-102 (LYESLFFLAWGITALHLLALH), 108-128 (WVGVMTAPVVTGIVAFAALVL), 153-173 (VMLLAYAALLVGSLLSISFLI), 258-278 (LIGLGFPLLTIGIIAGAVWAN), 293-313 (WALITWLVFAAYLHARITKGW), and 319-339 (ALLASLGFGVVWVCYLGVNFL).

Belongs to the CcmF/CycK/Ccl1/NrfE/CcsA family. As to quaternary structure, may interact with ccs1.

The protein resides in the cellular thylakoid membrane. Required during biogenesis of c-type cytochromes (cytochrome c6 and cytochrome f) at the step of heme attachment. This is Cytochrome c biogenesis protein CcsA from Synechococcus sp. (strain JA-2-3B'a(2-13)) (Cyanobacteria bacterium Yellowstone B-Prime).